The chain runs to 329 residues: Solute carrier family 35 member B1 (329 aa).

Transmembrane regions (helical) follow at residues 21 to 41, 60 to 80, 91 to 111, 142 to 162, 175 to 195, 220 to 240, 250 to 270, and 292 to 312; these read AVCFCGVFVCYFYYGILQETI, TLVFIQCIINAAFARLLIQFF, WLYGLCSLSYLGAMVSSNSAL, YPMAKYLCVFLIVGGVALFLY, VFGFGEMLLLLSLTLDGLTGV, TLVLGIAVLWSGEVWEFLAFT, ILLFGITSALGQTFIFMTVVY, and VLLFGNVISHMQWFGTILVFL. The Di-lysine motif motif lies at 325-329; that stretch reads KKTTH.

It belongs to the nucleotide-sugar transporter family. SLC35B subfamily.

It localises to the endoplasmic reticulum membrane. Probable sugar transporter. This is Solute carrier family 35 member B1 (slc35b1) from Danio rerio (Zebrafish).